The chain runs to 123 residues: Small ribosomal subunit protein uS13c (123 aa).

Positions glycine 90 to lysine 123 are disordered. The span at glutamine 102–lysine 123 shows a compositional bias: basic residues.

The protein belongs to the universal ribosomal protein uS13 family. In terms of assembly, part of the 30S ribosomal subunit.

The protein localises to the plastid. Its subcellular location is the chloroplast. In terms of biological role, located at the top of the head of the 30S subunit, it contacts several helices of the 16S rRNA. The chain is Small ribosomal subunit protein uS13c from Thalassiosira pseudonana (Marine diatom).